A 775-amino-acid chain; its full sequence is Transposon TX1 uncharacterized 82 kDa protein (775 aa).

A compositionally biased stretch (basic and acidic residues) spans 1–10 (MGGNKKESYK). Disordered regions lie at residues 1 to 46 (MGGN…ASTS), 256 to 277 (PKGQ…KTSY), and 535 to 565 (PIQD…TSTV). Residues 35-46 (EPMSKSPIASTS) show a composition bias toward polar residues. A compositionally biased stretch (basic and acidic residues) spans 539-549 (PADKTAGKDGE).

This chain is Transposon TX1 uncharacterized 82 kDa protein, found in Xenopus laevis (African clawed frog).